A 573-amino-acid chain; its full sequence is Sulfate adenylyltransferase (573 aa).

Residues methionine 1–tyrosine 169 form an N-terminal region. Residues aspartate 170–glutamine 394 form a catalytic region. Glutamine 197 is a sulfate binding site. Residues glutamine 197–asparagine 200 and glycine 291–histidine 294 each bind ATP. Residues threonine 198, arginine 199, and asparagine 200 contribute to the active site. Arginine 199 serves as a coordination point for sulfate. Alanine 295 lines the sulfate pocket. Methionine 333 is an ATP binding site. The tract at residues glutamine 395–phenylalanine 573 is allosteric regulation domain; adenylyl-sulfate kinase-like. 3'-phosphoadenylyl sulfate is bound by residues glutamate 434–arginine 437, arginine 451, isoleucine 477–alanine 478, and arginine 515.

In the N-terminal section; belongs to the sulfate adenylyltransferase family. It in the C-terminal section; belongs to the APS kinase family. As to quaternary structure, homohexamer. Dimer of trimers.

It localises to the cytoplasm. The catalysed reaction is sulfate + ATP + H(+) = adenosine 5'-phosphosulfate + diphosphate. It participates in sulfur metabolism; hydrogen sulfide biosynthesis; sulfite from sulfate: step 1/3. With respect to regulation, allosterically inhibited by 3'-phosphoadenosine 5'-phosphosulfate (PAPS). Functionally, catalyzes the first intracellular reaction of sulfate assimilation, forming adenosine-5'-phosphosulfate (APS) from inorganic sulfate and ATP. Plays an important role in sulfate activation as a component of the biosynthesis pathway of sulfur-containing amino acids. The sequence is that of Sulfate adenylyltransferase (cys-11) from Neurospora crassa (strain ATCC 24698 / 74-OR23-1A / CBS 708.71 / DSM 1257 / FGSC 987).